The following is a 166-amino-acid chain: Lipoprotein signal peptidase (166 aa).

Helical transmembrane passes span 9 to 29 (ASGA…FDQL), 45 to 65 (ALTS…FGFL), 71 to 91 (WQRW…CFLL), and 100 to 120 (FSLS…DRLV). Residues D126 and D144 contribute to the active site. A helical membrane pass occupies residues 135–155 (WHFPAFNLADSAITIGAVLLI).

Belongs to the peptidase A8 family.

The protein localises to the cell inner membrane. It catalyses the reaction Release of signal peptides from bacterial membrane prolipoproteins. Hydrolyzes -Xaa-Yaa-Zaa-|-(S,diacylglyceryl)Cys-, in which Xaa is hydrophobic (preferably Leu), and Yaa (Ala or Ser) and Zaa (Gly or Ala) have small, neutral side chains.. The protein operates within protein modification; lipoprotein biosynthesis (signal peptide cleavage). In terms of biological role, this protein specifically catalyzes the removal of signal peptides from prolipoproteins. This chain is Lipoprotein signal peptidase, found in Burkholderia multivorans (strain ATCC 17616 / 249).